We begin with the raw amino-acid sequence, 25 residues long: Aurein-5.2 (25 aa).

In terms of tissue distribution, expressed by the skin dorsal glands.

It is found in the secreted. Its function is as follows. Has antimicrobial activity against L.lactis and S.uberis. In Ranoidea raniformis (Southern bell frog), this protein is Aurein-5.2.